The chain runs to 105 residues: MTLSGKISVKAETIAHVVKELESISQKYDEIAQNFGKIAQLNYYSSEKAAHSMENGYSSAATVISGLKGPLSTLGGGVMNSAQKFFEADEHWGTEFAKLYYNIEG.

Forms heterodimers with EsxB.

The protein resides in the secreted. This is Type VII secretion system extracellular protein D from Staphylococcus aureus (strain USA300).